A 312-amino-acid chain; its full sequence is Methionyl-tRNA formyltransferase (312 aa).

113 to 116 serves as a coordination point for (6S)-5,6,7,8-tetrahydrofolate; that stretch reads SLLP.

This sequence belongs to the Fmt family.

The enzyme catalyses L-methionyl-tRNA(fMet) + (6R)-10-formyltetrahydrofolate = N-formyl-L-methionyl-tRNA(fMet) + (6S)-5,6,7,8-tetrahydrofolate + H(+). Functionally, attaches a formyl group to the free amino group of methionyl-tRNA(fMet). The formyl group appears to play a dual role in the initiator identity of N-formylmethionyl-tRNA by promoting its recognition by IF2 and preventing the misappropriation of this tRNA by the elongation apparatus. This chain is Methionyl-tRNA formyltransferase, found in Francisella philomiragia subsp. philomiragia (strain ATCC 25017 / CCUG 19701 / FSC 153 / O#319-036).